The following is a 61-amino-acid chain: Temporin-CG3 (61 aa).

Positions 1 to 22 (MFTMKKPLLLLFFLATINLSLC) are cleaved as a signal peptide. A propeptide spans 23 to 44 (EQERNAEEERRDEPDERNAEVE) (removed in mature form).

This sequence belongs to the frog skin active peptide (FSAP) family. Temporin subfamily. In terms of tissue distribution, expressed by the skin glands.

It is found in the secreted. Its function is as follows. Antimicrobial peptide active against a variety of Gram-positive bacterial strains but not against Gram-negative bacteria. Has weak antifungal activity against a slime mold isolate. Has weak hemolytic activity against human erythrocytes. The chain is Temporin-CG3 from Amolops chunganensis (Chungan torrent frog).